We begin with the raw amino-acid sequence, 389 residues long: Rhizopuspepsin-1 (389 aa).

Positions 1-21 are cleaved as a signal peptide; the sequence is MKFTLISSCVALAAMTLAVEA. Residues 22 to 66 constitute a propeptide, activation peptide; sequence APNGKKINIPLAKNNSYKPSAKNALNKALAKYNRRKVGSGGITTE. In terms of domain architecture, Peptidase A1 spans 82–385; that stretch reads YYGEVTVGTP…NQEVPEVQIA (304 aa). Residue aspartate 100 is part of the active site. A disulfide bridge connects residues cysteine 113 and cysteine 116. Aspartate 283 is an active-site residue. Cysteine 317 and cysteine 350 are oxidised to a cystine.

The protein belongs to the peptidase A1 family.

It carries out the reaction Hydrolysis of proteins with broad specificity similar to that of pepsin A, preferring hydrophobic residues at P1 and P1'. Clots milk and activates trypsinogen. Does not cleave 4-Gln-|-His-5, but does cleave 10-His-|-Leu-11 and 12-Val-|-Glu-13 in B chain of insulin.. In Rhizopus niveus, this protein is Rhizopuspepsin-1 (RNAP).